The chain runs to 398 residues: MEKTIEDPPTSAVLLDHCHFSQVIFNSVEKFYIPGGDVTCRYTFTQNFIPRQKDWIGIFRVGWKTVREYYTFMWVTLPIDLNNKSAKQQEVQFKAYYLPKDDEYYQFCYVDQDGVVRGASIPFQFRPENEEDILVVTTQGEVEEIEQHNKELCKENQELKDSCVSLQKQNSDMQAELQKKQEELETLQSINKKLELKVKEQKDYWETEQLEHLKKENGHLFLSLTEQRKDQKKLEQTVEEMKQNETTAMKKQQELMDENFDLSRRLSEKKMIYNALQREKERLEGENDLLKRENSRLLSYMGLDFNSLPYQVPTSDEGGAGQNPGLVYGNPYSGIQESSSPSQLSIKKCPICKADDICDHTLEQQQMQALCLNCPICDKIFPATEKQIFEDHVFCHSL.

The short motif at 133–136 (ILVV) is the CLIR element. Residues 137–301 (TTQGEVEEIE…RENSRLLSYM (165 aa)) adopt a coiled-coil conformation. Residues 203-206 (DYWE) carry the LIR-like motif. The interval 314–341 (TSDEGGAGQNPGLVYGNPYSGIQESSSP) is disordered. The interval 323-333 (NPGLVYGNPYS) is interaction with LGALS8. Residues 347–398 (KKCPICKADDICDHTLEQQQMQALCLNCPICDKIFPATEKQIFEDHVFCHSL) form an interaction with MYO6 region. Residues 371-396 (CLNCPICDKIFPATEKQIFEDHVFCH) form a UBZ1-type zinc finger. 4 residues coordinate Zn(2+): Cys-374, Cys-377, His-392, and His-396. Residue Ser-397 is modified to Phosphoserine.

Belongs to the CALCOCO family. As to quaternary structure, dimer. Part of a complex consisting of CALCOCO2, TAX1BP1 and MYO6. Interacts with MYO6. Interacts with GEMIN4. Interacts with ATG8 family members MAP1LC3A, MAP1LC3B, GABARAP, GABARAPL1 and GABARAPL2. Interacts with ATG8 family member MAP1LC3C. Interacts with LGALS8. Interacts with TOM1; the interaction is indirect and is mediated by MYO6, which acts as a bridge between TOM1 and CALCOCO2. Interacts with AZI2.

The protein localises to the cytoplasm. It localises to the perinuclear region. Its subcellular location is the cytoskeleton. It is found in the cytoplasmic vesicle. The protein resides in the autophagosome membrane. Functionally, xenophagy-specific receptor required for autophagy-mediated intracellular bacteria degradation. Acts as an effector protein of galectin-sensed membrane damage that restricts the proliferation of infecting pathogens upon entry into the cytosol by targeting LGALS8-associated bacteria for autophagy. Initially orchestrates bacteria targeting to autophagosomes and subsequently ensures pathogen degradation by regulating pathogen-containing autophagosome maturation. Bacteria targeting to autophagosomes relies on its interaction with MAP1LC3A, MAP1LC3B and/or GABARAPL2, whereas regulation of pathogen-containing autophagosome maturation requires the interaction with MAP3LC3C. May play a role in ruffle formation and actin cytoskeleton organization and seems to negatively regulate constitutive secretion. In Macaca fascicularis (Crab-eating macaque), this protein is Calcium-binding and coiled-coil domain-containing protein 2.